The primary structure comprises 290 residues: GTPase Era (290 aa).

Residues 2-169 (KSGFVSIIGR…KDKIYENLNE (168 aa)) form the Era-type G domain. Positions 10-17 (GRPSTGKS) are G1. Position 10-17 (10-17 (GRPSTGKS)) interacts with GTP. The segment at 36 to 40 (QTTRN) is G2. The segment at 57–60 (DTPG) is G3. GTP-binding positions include 57-61 (DTPGF) and 119-122 (NKID). The segment at 119–122 (NKID) is G4. Residues 148 to 150 (ISA) are G5. The KH type-2 domain occupies 200–276 (LKEELPYSIY…NLFLQVKLRK (77 aa)).

This sequence belongs to the TRAFAC class TrmE-Era-EngA-EngB-Septin-like GTPase superfamily. Era GTPase family. As to quaternary structure, monomer.

The protein resides in the cytoplasm. The protein localises to the cell inner membrane. Its function is as follows. An essential GTPase that binds both GDP and GTP, with rapid nucleotide exchange. Plays a role in 16S rRNA processing and 30S ribosomal subunit biogenesis and possibly also in cell cycle regulation and energy metabolism. The protein is GTPase Era of Borrelia duttonii (strain Ly).